A 301-amino-acid polypeptide reads, in one-letter code: Mitochondrial carnitine/acylcarnitine carrier protein (301 aa).

N-acetylalanine is present on Ala2. Residues 2-12 (ADQPKPISPLK) lie on the Cytoplasmic side of the membrane. Solcar repeat units lie at residues 8 to 99 (ISPL…GKKL), 108 to 196 (LSYP…LKNI), and 207 to 293 (LSAP…AMKF). Residues 13 to 31 (NLLAGGFGGVCLVFVGHPL) form a helical membrane-spanning segment. Residues 32-73 (DTVKVRLQTQPPSLPGQPPMYSGTFDCFRKTLFREGITGLYR) are Mitochondrial matrix-facing. A helical membrane pass occupies residues 74 to 93 (GMAAPIIGVTPMFAVCFFGF). The Cytoplasmic segment spans residues 94 to 112 (GLGKKLQQKHPEDVLSYPQ). A helical membrane pass occupies residues 113 to 131 (LFAAGMLSGVFTTGIMTPG). Topologically, residues 132–170 (ERIKCLLQIQASSGESKYTGTLDCAKKLYQEFGIRGIYK) are mitochondrial matrix. Lys148 and Lys157 each carry N6-acetyllysine. Residue Lys170 is modified to N6-acetyllysine; alternate. Lys170 carries the post-translational modification N6-succinyllysine; alternate. The helical transmembrane segment at 171–190 (GTVLTLMRDVPASGMYFMTY) threads the bilayer. The Cytoplasmic portion of the chain corresponds to 191 to 211 (EWLKNIFTPEGKRVSELSAPR). A helical transmembrane segment spans residues 212 to 230 (ILVAGGIAGIFNWAVAIPP). Residues 231–267 (DVLKSRFQTAPPGKYPNGFRDVLRELIRDEGVTSLYK) lie on the Mitochondrial matrix side of the membrane. Residues 268–287 (GFNAVMIRAFPANAACFLGF) form a helical membrane-spanning segment. Over 288–301 (EVAMKFLNWATPNL) the chain is Cytoplasmic.

The protein belongs to the mitochondrial carrier (TC 2.A.29) family.

The protein localises to the mitochondrion inner membrane. It carries out the reaction O-acetyl-(R)-carnitine(in) + (R)-carnitine(out) = O-acetyl-(R)-carnitine(out) + (R)-carnitine(in). The enzyme catalyses an O-acyl-(R)-carnitine(in) + (R)-carnitine(out) = an O-acyl-(R)-carnitine(out) + (R)-carnitine(in). It catalyses the reaction O-propanoyl-(R)-carnitine(in) + (R)-carnitine(out) = O-propanoyl-(R)-carnitine(out) + (R)-carnitine(in). The catalysed reaction is O-hexadecanoyl-(R)-carnitine(in) + (R)-carnitine(out) = O-hexadecanoyl-(R)-carnitine(out) + (R)-carnitine(in). It carries out the reaction O-octanoyl-(R)-carnitine(in) + (R)-carnitine(out) = O-octanoyl-(R)-carnitine(out) + (R)-carnitine(in). The enzyme catalyses (R)-carnitine(in) = (R)-carnitine(out). Functionally, mediates the electroneutral exchange of acylcarnitines (O-acyl-(R)-carnitine or L-acylcarnitine) of different acyl chain lengths (ranging from O-acetyl-(R)-carnitine to long-chain O-acyl-(R)-carnitines) with free carnitine ((R)-carnitine or L-carnitine) across the mitochondrial inner membrane, via a ping-pong mechanism. Key player in the mitochondrial oxidation pathway, it translocates the fatty acids in the form of acylcarnitines into the mitochondrial matrix, where the carnitine palmitoyltransferase 2 (CPT-2) activates them to undergo fatty acid beta-oxidation. Catalyzes the unidirectional transport (uniport) of carnitine at lower rates than the antiport (exchange). This is Mitochondrial carnitine/acylcarnitine carrier protein from Homo sapiens (Human).